The sequence spans 336 residues: E3 ubiquitin-protein ligase RING2 (336 aa).

Residues Thr-2–Cys-179 form an interaction with HIP2 region. An RING-type zinc finger spans residues Cys-51 to Arg-91. Residues Lys-93–Arg-98 form an interaction with nucleosomes via an acidic patch on histone H2A and histone H2B region. The interval Arg-158–Ile-218 is disordered. A compositionally biased stretch (polar residues) spans Ser-176–Ala-190.

In terms of assembly, component of chromatin-associated Polycomb (PcG) complexes. Component of a PRC1-like complex. Component of some MLL1/MLL complex.

It localises to the nucleus. The protein localises to the cytoplasm. Its subcellular location is the chromosome. It catalyses the reaction S-ubiquitinyl-[E2 ubiquitin-conjugating enzyme]-L-cysteine + [acceptor protein]-L-lysine = [E2 ubiquitin-conjugating enzyme]-L-cysteine + N(6)-ubiquitinyl-[acceptor protein]-L-lysine.. The protein operates within protein modification; protein ubiquitination. Its function is as follows. E3 ubiquitin-protein ligase that mediates monoubiquitination of 'Lys-119' of histone H2A (H2AK119Ub), thereby playing a central role in histone code and gene regulation. H2AK119Ub gives a specific tag for epigenetic transcriptional repression. Essential component of a Polycomb group (PcG) multiprotein PRC1-like complex, a complex class required to maintain the transcriptionally repressive state of many genes, including Hox genes, throughout development. PcG PRC1 complex acts via chromatin remodeling and modification of histones, rendering chromatin heritably changed in its expressibility. The chain is E3 ubiquitin-protein ligase RING2 (rnf2) from Danio rerio (Zebrafish).